The chain runs to 515 residues: Ecdysteroid UDP-glucosyltransferase (515 aa).

Positions 1 to 31 are cleaved as a signal peptide; it reads MKMIILVVSLHVLRNSAAVRVLCMFPTPSYS.

Belongs to the UDP-glycosyltransferase family.

Its function is as follows. Catalyzes the transfer of glucose from UDP-glucose to ecdysteroids which are insect molting hormones. Expression of egt interferes with normal insect development and block molting. The sequence is that of Ecdysteroid UDP-glucosyltransferase (EGT) from Spodoptera littoralis nuclear polyhedrosis virus (SlNPV).